Consider the following 207-residue polypeptide: Dephospho-CoA kinase (207 aa).

In terms of domain architecture, DPCK spans 5–202 (VVGLTGGIGS…LQYLKLSAEK (198 aa)). Residue 13–18 (GSGKST) participates in ATP binding.

The protein belongs to the CoaE family.

Its subcellular location is the cytoplasm. It carries out the reaction 3'-dephospho-CoA + ATP = ADP + CoA + H(+). It participates in cofactor biosynthesis; coenzyme A biosynthesis; CoA from (R)-pantothenate: step 5/5. Its function is as follows. Catalyzes the phosphorylation of the 3'-hydroxyl group of dephosphocoenzyme A to form coenzyme A. This is Dephospho-CoA kinase from Dechloromonas aromatica (strain RCB).